We begin with the raw amino-acid sequence, 626 residues long: DNA mismatch repair protein MutL (626 aa).

The protein belongs to the DNA mismatch repair MutL/HexB family.

Its function is as follows. This protein is involved in the repair of mismatches in DNA. It is required for dam-dependent methyl-directed DNA mismatch repair. May act as a 'molecular matchmaker', a protein that promotes the formation of a stable complex between two or more DNA-binding proteins in an ATP-dependent manner without itself being part of a final effector complex. The chain is DNA mismatch repair protein MutL from Chlorobium luteolum (strain DSM 273 / BCRC 81028 / 2530) (Pelodictyon luteolum).